We begin with the raw amino-acid sequence, 358 residues long: MARALLFSLVFLAILLPALAACPQNCHCHGDLQHVICDKVGLQKIPKVSETTKLLNLQRNNFPVLAANSFRTMPNLVSLHLQHCNIREVAAGAFRGLKQLIYLYLSHNDIRVLRAGAFDDLTELTYLYLDHNKVSELPRGLLSPLVNLFILQLNNNKIRELRAGAFQGAKDLRWLYLSENALSSLQPGSLDDVENLAKFHLDKNQLSSYPSAALSKLRVVEELKLSHNPLKSIPDNAFQSFGRYLETLWLDNTNLEKFSDAAFSGVTTLKHVHLDNNRLNQLPSSFPFDNLETLTLTNNPWKCTCQLRGLRRWLEAKASRPDATCSSPAKFKGQRIRDTDALRSCKSPTKRSKKAGRH.

Residues 1–20 form the signal peptide; that stretch reads MARALLFSLVFLAILLPALA. The LRRNT domain occupies 21–50; that stretch reads ACPQNCHCHGDLQHVICDKVGLQKIPKVSE. The cysteines at positions 22 and 37 are disulfide-linked. LRR repeat units follow at residues 51-72, 75-96, 99-120, 123-144, 147-168, 171-192, 195-216, 219-240, 244-265, and 268-289; these read TTKL…SFRT, NLVS…AFRG, QLIY…AFDD, ELTY…LLSP, NLFI…AFQG, DLRW…SLDD, NLAK…ALSK, VVEE…AFQS, YLET…AFSG, and TLKH…FPFD. The O-linked (GalNAc...) serine glycan is linked to S143. An LRRCT domain is found at 299 to 347; that stretch reads NPWKCTCQLRGLRRWLEAKASRPDATCSSPAKFKGQRIRDTDALRSCKS. 2 disulfide bridges follow: C303-C345 and C305-C325. Residues 322-358 are disordered; sequence DATCSSPAKFKGQRIRDTDALRSCKSPTKRSKKAGRH. Positions 348–358 are enriched in basic residues; that stretch reads PTKRSKKAGRH.

Belongs to the small leucine-rich proteoglycan (SLRP) family. SLRP class IV subfamily. In terms of assembly, mostly monomeric. Interacts with collagen type II. Cartilage.

The protein localises to the secreted. The protein resides in the extracellular space. Its subcellular location is the extracellular matrix. Functionally, promotes attachment of chondrocytes, fibroblasts, and osteoblasts. This binding is mediated (at least for chondrocytes and fibroblasts) by the integrin alpha(2)beta(1). May play an important role in the regulation of chondrocyte growth and proliferation. The chain is Chondroadherin (Chad) from Mus musculus (Mouse).